The sequence spans 426 residues: 3-phosphoshikimate 1-carboxyvinyltransferase (426 aa).

Residues lysine 21, serine 22, and arginine 26 each contribute to the 3-phosphoshikimate site. Lysine 21 contacts phosphoenolpyruvate. Residues glycine 92 and arginine 122 each contribute to the phosphoenolpyruvate site. 3-phosphoshikimate is bound by residues serine 167, serine 168, glutamine 169, serine 195, aspartate 315, and lysine 342. A phosphoenolpyruvate-binding site is contributed by glutamine 169. The Proton acceptor role is filled by aspartate 315. The phosphoenolpyruvate site is built by arginine 346 and arginine 386.

The protein belongs to the EPSP synthase family. As to quaternary structure, monomer.

It localises to the cytoplasm. The catalysed reaction is 3-phosphoshikimate + phosphoenolpyruvate = 5-O-(1-carboxyvinyl)-3-phosphoshikimate + phosphate. It functions in the pathway metabolic intermediate biosynthesis; chorismate biosynthesis. Catalyzes the transfer of the enolpyruvyl moiety of phosphoenolpyruvate (PEP) to the 5-hydroxyl of shikimate-3-phosphate (S3P) to produce enolpyruvyl shikimate-3-phosphate and inorganic phosphate. This is 3-phosphoshikimate 1-carboxyvinyltransferase from Methanosphaera stadtmanae (strain ATCC 43021 / DSM 3091 / JCM 11832 / MCB-3).